A 172-amino-acid chain; its full sequence is Bifunctional protein PyrR (172 aa).

The PRPP-binding motif lies at 93-105 (VILIDDVLYTGRT).

It belongs to the purine/pyrimidine phosphoribosyltransferase family. PyrR subfamily. In terms of assembly, homodimer and homohexamer; in equilibrium.

The catalysed reaction is UMP + diphosphate = 5-phospho-alpha-D-ribose 1-diphosphate + uracil. Its function is as follows. Regulates transcriptional attenuation of the pyrimidine nucleotide (pyr) operon by binding in a uridine-dependent manner to specific sites on pyr mRNA. This disrupts an antiterminator hairpin in the RNA and favors formation of a downstream transcription terminator, leading to a reduced expression of downstream genes. Functionally, also displays a weak uracil phosphoribosyltransferase activity which is not physiologically significant. The sequence is that of Bifunctional protein PyrR from Streptococcus sanguinis (strain SK36).